We begin with the raw amino-acid sequence, 354 residues long: Coiled-coil domain-containing protein 86 (354 aa).

A disordered region spans residues 1-354 (MDTPLRRSRR…QPPQRPATKV (354 aa)). Serine 18 and serine 24 each carry phosphoserine. Positions 31 to 44 (VLVEFESNPKETGE) are enriched in basic and acidic residues. A phosphoserine mark is found at serine 47 and serine 53. A compositionally biased stretch (low complexity) spans 49 to 58 (PGLGSPSRQP). Threonine 60 is subject to Phosphothreonine. Phosphoserine is present on residues serine 61, serine 64, serine 75, serine 86, serine 105, serine 108, serine 123, and serine 183. The span at 97–107 (FPQNQPESSPE) shows a compositional bias: polar residues. Residues 199–211 (PAREGPAPKKREG) show a composition bias toward basic and acidic residues. Serine 212 and serine 213 each carry phosphoserine. Residues 232 to 248 (GKPKSGRVWKDRSKKRF) are compositionally biased toward basic residues. Basic and acidic residues-rich tracts occupy residues 267–289 (DRQE…ERRR) and 297–311 (AENL…RKAE). Residues 274-317 (AKDFARHLEEEKERRRQEKKKRRAENLRRRLENERKAEIVQVIR) adopt a coiled-coil conformation. Residues 320 to 330 (AKLKRAKKKQL) show a composition bias toward basic residues. The residue at position 336 (arginine 336) is a Citrulline.

In terms of processing, citrullinated by PADI4.

The protein resides in the nucleus. It localises to the chromosome. It is found in the nucleolus. Functionally, required for proper chromosome segregation during mitosis and error-free mitotic progression. This is Coiled-coil domain-containing protein 86 from Bos taurus (Bovine).